We begin with the raw amino-acid sequence, 227 residues long: MAKGVFITATNTDIGKTYITALIVKKLREANINCGYYKAALSGAEIINNNIVAGDAKYVYNVANIKGNPNECVSYIFKQAVSPHLAAKLNNVHISMDKIVADFNYRCNEHDYITVEGSGGIICPIYYDKEKIMLTDIIKKLKIPIILVSPSGLGSINGTILTLEYIKKHNLVVNSIILNNYDKSNIIHIDNKRILEEMTNLPVYTCEQYSEDIDIPLKELKQFYDFI.

13–18 serves as a coordination point for ATP; it reads DIGKTY. Thr17 provides a ligand contact to Mg(2+). Residue Lys38 is part of the active site. Ser42 is a substrate binding site. Residues Asp55, 116-119, and 179-180 contribute to the ATP site; these read EGSG and NN. Mg(2+) is bound by residues Asp55 and Glu116.

It belongs to the dethiobiotin synthetase family. As to quaternary structure, homodimer. The cofactor is Mg(2+).

Its subcellular location is the cytoplasm. The enzyme catalyses (7R,8S)-7,8-diammoniononanoate + CO2 + ATP = (4R,5S)-dethiobiotin + ADP + phosphate + 3 H(+). It functions in the pathway cofactor biosynthesis; biotin biosynthesis; biotin from 7,8-diaminononanoate: step 1/2. Its function is as follows. Catalyzes a mechanistically unusual reaction, the ATP-dependent insertion of CO2 between the N7 and N8 nitrogen atoms of 7,8-diaminopelargonic acid (DAPA, also called 7,8-diammoniononanoate) to form a ureido ring. The sequence is that of ATP-dependent dethiobiotin synthetase BioD from Clostridium botulinum (strain Eklund 17B / Type B).